Consider the following 142-residue polypeptide: MIKKIAIIMAFDFGTKKIGIAIGQKITGTTQSLEILPSKFGIPNWKKIEHIFNVWKPNKLIVGLPLKMNGNTQHITLLSKRFAVQLTHRFKITVEMHDERFTTIEARSIYFQHFRYYYRKKTTPIDSIAAEIILKSWLNQND.

Belongs to the YqgF nuclease family.

Its subcellular location is the cytoplasm. Its function is as follows. Could be a nuclease involved in processing of the 5'-end of pre-16S rRNA. The chain is Putative pre-16S rRNA nuclease from Blochmanniella floridana.